The sequence spans 96 residues: Glutamyl-tRNA(Gln) amidotransferase subunit C (96 aa).

This sequence belongs to the GatC family. Heterotrimer of A, B and C subunits.

The catalysed reaction is L-glutamyl-tRNA(Gln) + L-glutamine + ATP + H2O = L-glutaminyl-tRNA(Gln) + L-glutamate + ADP + phosphate + H(+). The enzyme catalyses L-aspartyl-tRNA(Asn) + L-glutamine + ATP + H2O = L-asparaginyl-tRNA(Asn) + L-glutamate + ADP + phosphate + 2 H(+). Functionally, allows the formation of correctly charged Asn-tRNA(Asn) or Gln-tRNA(Gln) through the transamidation of misacylated Asp-tRNA(Asn) or Glu-tRNA(Gln) in organisms which lack either or both of asparaginyl-tRNA or glutaminyl-tRNA synthetases. The reaction takes place in the presence of glutamine and ATP through an activated phospho-Asp-tRNA(Asn) or phospho-Glu-tRNA(Gln). The polypeptide is Glutamyl-tRNA(Gln) amidotransferase subunit C (Halalkalibacterium halodurans (strain ATCC BAA-125 / DSM 18197 / FERM 7344 / JCM 9153 / C-125) (Bacillus halodurans)).